Here is a 177-residue protein sequence, read N- to C-terminus: Large ribosomal subunit protein uL6 (177 aa).

Belongs to the universal ribosomal protein uL6 family. In terms of assembly, part of the 50S ribosomal subunit.

In terms of biological role, this protein binds to the 23S rRNA, and is important in its secondary structure. It is located near the subunit interface in the base of the L7/L12 stalk, and near the tRNA binding site of the peptidyltransferase center. The sequence is that of Large ribosomal subunit protein uL6 from Sphingopyxis alaskensis (strain DSM 13593 / LMG 18877 / RB2256) (Sphingomonas alaskensis).